Here is a 586-residue protein sequence, read N- to C-terminus: Axin-like protein pry-1 (586 aa).

The tract at residues Met-1–Ser-135 is required for interaction with apr-1. Residues Ser-10–Asn-131 form the RGS domain. 3 disordered regions span residues Thr-137–Ala-168, Met-344–Ala-442, and Thr-478–Ile-501. Polar residues-rich tracts occupy residues His-151–Ala-168 and Gly-368–Asn-388. Positions Ser-421–Ala-442 are enriched in low complexity. Residues Arg-486–Ile-501 are compositionally biased toward basic residues. Residues Leu-505 to Arg-586 enclose the DIX domain.

In terms of assembly, interacts (via N-terminus) with apr-1 (via C-terminus). Interacts with bar-1 (via ARM repeats), gsk-3, and mig-5. Expressed in hypodermal cells (seam cells) V5 and V6, Q neuroblasts, ventral hypodermal cells P7/8 to P11/12, body wall muscle cells and neurons in the head, the tail and the ventral nerve cord.

Its subcellular location is the cell membrane. It localises to the nucleus. The protein localises to the cytoplasm. The protein resides in the cell cortex. In terms of biological role, works in parallel with axl-1 in negatively regulating bar-1 signaling in vulval precursor cells and Q neuroblasts. Inhibits Wnt signaling, which affects tissue specific expression of Hox genes, egl-5, lin-39 and mab-5. This in turn affects QR (postembryonic neuroblast) cell migration, vulval cell fate specification, and the development of sensory structures by the seam cell lineage. Has a role in alae V cell patterning, ray formation in the male tail and axon guidance. Does not affect B cell polarity. The protein is Axin-like protein pry-1 of Caenorhabditis elegans.